The chain runs to 237 residues: Uridylate kinase (237 aa).

12–15 (KISG) lines the ATP pocket. Gly-54 lines the UMP pocket. ATP contacts are provided by Gly-55 and Arg-59. UMP-binding positions include Asp-72 and 133-140 (TGNPFFST). Residues Tyr-166 and Asp-169 each contribute to the ATP site.

This sequence belongs to the UMP kinase family. Homohexamer.

The protein resides in the cytoplasm. The enzyme catalyses UMP + ATP = UDP + ADP. The protein operates within pyrimidine metabolism; CTP biosynthesis via de novo pathway; UDP from UMP (UMPK route): step 1/1. With respect to regulation, inhibited by UTP. In terms of biological role, catalyzes the reversible phosphorylation of UMP to UDP. The chain is Uridylate kinase from Caldanaerobacter subterraneus subsp. tengcongensis (strain DSM 15242 / JCM 11007 / NBRC 100824 / MB4) (Thermoanaerobacter tengcongensis).